Consider the following 343-residue polypeptide: 4-hydroxythreonine-4-phosphate dehydrogenase (343 aa).

Positions 141 and 142 each coordinate substrate. The a divalent metal cation site is built by histidine 175, histidine 220, and histidine 275. Residues lysine 283, asparagine 292, and arginine 301 each contribute to the substrate site.

The protein belongs to the PdxA family. As to quaternary structure, homodimer. Zn(2+) is required as a cofactor. It depends on Mg(2+) as a cofactor. Co(2+) serves as cofactor.

The protein localises to the cytoplasm. It catalyses the reaction 4-(phosphooxy)-L-threonine + NAD(+) = 3-amino-2-oxopropyl phosphate + CO2 + NADH. The protein operates within cofactor biosynthesis; pyridoxine 5'-phosphate biosynthesis; pyridoxine 5'-phosphate from D-erythrose 4-phosphate: step 4/5. In terms of biological role, catalyzes the NAD(P)-dependent oxidation of 4-(phosphooxy)-L-threonine (HTP) into 2-amino-3-oxo-4-(phosphooxy)butyric acid which spontaneously decarboxylates to form 3-amino-2-oxopropyl phosphate (AHAP). This Janthinobacterium sp. (strain Marseille) (Minibacterium massiliensis) protein is 4-hydroxythreonine-4-phosphate dehydrogenase.